Consider the following 92-residue polypeptide: Small ribosomal subunit protein uS19 (92 aa).

This sequence belongs to the universal ribosomal protein uS19 family.

Protein S19 forms a complex with S13 that binds strongly to the 16S ribosomal RNA. This chain is Small ribosomal subunit protein uS19, found in Gloeobacter violaceus (strain ATCC 29082 / PCC 7421).